The sequence spans 256 residues: Thiazole synthase (256 aa).

The active-site Schiff-base intermediate with DXP is the Lys96. 1-deoxy-D-xylulose 5-phosphate-binding positions include Gly157, 183–184, and 205–206; these read AG and NT.

The protein belongs to the ThiG family. Homotetramer. Forms heterodimers with either ThiH or ThiS.

It localises to the cytoplasm. The catalysed reaction is [ThiS sulfur-carrier protein]-C-terminal-Gly-aminoethanethioate + 2-iminoacetate + 1-deoxy-D-xylulose 5-phosphate = [ThiS sulfur-carrier protein]-C-terminal Gly-Gly + 2-[(2R,5Z)-2-carboxy-4-methylthiazol-5(2H)-ylidene]ethyl phosphate + 2 H2O + H(+). It functions in the pathway cofactor biosynthesis; thiamine diphosphate biosynthesis. Its function is as follows. Catalyzes the rearrangement of 1-deoxy-D-xylulose 5-phosphate (DXP) to produce the thiazole phosphate moiety of thiamine. Sulfur is provided by the thiocarboxylate moiety of the carrier protein ThiS. In vitro, sulfur can be provided by H(2)S. The polypeptide is Thiazole synthase (Bacillus cereus (strain G9842)).